Consider the following 439-residue polypeptide: Synaptotagmin-B (439 aa).

The Vesicular segment spans residues 1–74; that stretch reads MQAEMNQSAE…KEKFMNELQK (74 aa). 2 N-linked (GlcNAc...) asparagine glycosylation sites follow: N6 and N46. Residues 75-101 traverse the membrane as a helical segment; the sequence is IPLPPWALIAIAIVSGLLLLTCCLCIC. The Cytoplasmic portion of the chain corresponds to 102-439; that stretch reads KKCCCKKKKN…EVDVALGLKK (338 aa). Residues 113 to 155 are disordered; sequence KEKGKGKKNDINMKDVKGSGGNQDDDDAETGLTEGEDKEEEAK. The segment covering 119-129 has biased composition (basic and acidic residues); sequence KKNDINMKDVK. The segment covering 135 to 151 has biased composition (acidic residues); the sequence is QDDDDAETGLTEGEDKE. The segment at 153 to 399 is phospholipid binding; it reads EAKEEEKLGK…AIGKIFVGSN (247 aa). C2 domains lie at 159–278 and 290–423; these read KLGK…EEWR and KLGD…AQWH. L189, D190, D196, D248, F249, D250, S253, K254, D256, D321, D327, D381, D383, and D389 together coordinate Ca(2+).

The protein belongs to the synaptotagmin family. As to quaternary structure, homodimer or homotrimer (possible). The cofactor is Ca(2+). In terms of tissue distribution, spinal cord, brainstem, midbrain and electric organ.

The protein resides in the cytoplasmic vesicle. It is found in the secretory vesicle. The protein localises to the synaptic vesicle membrane. Its subcellular location is the synapse. Functionally, may have a regulatory role in the membrane interactions during trafficking of synaptic vesicles at the active zone of the synapse. It binds acidic phospholipids with a specificity that requires the presence of both an acidic head group and a diacyl backbone. This Diplobatis ommata (Ocellated electric ray) protein is Synaptotagmin-B (P65-B).